Reading from the N-terminus, the 160-residue chain is Phosphopantetheine adenylyltransferase (160 aa).

Residue Ser-10 participates in substrate binding. Residues 10-11 (SF) and His-18 contribute to the ATP site. Residues Lys-42, Thr-74, and Arg-88 each contribute to the substrate site. ATP is bound by residues 89-91 (GLR), Glu-99, and 124-130 (FYYISSR).

Belongs to the bacterial CoaD family. Homohexamer. Mg(2+) is required as a cofactor.

The protein resides in the cytoplasm. It catalyses the reaction (R)-4'-phosphopantetheine + ATP + H(+) = 3'-dephospho-CoA + diphosphate. It participates in cofactor biosynthesis; coenzyme A biosynthesis; CoA from (R)-pantothenate: step 4/5. Its function is as follows. Reversibly transfers an adenylyl group from ATP to 4'-phosphopantetheine, yielding dephospho-CoA (dPCoA) and pyrophosphate. This chain is Phosphopantetheine adenylyltransferase, found in Bdellovibrio bacteriovorus (strain ATCC 15356 / DSM 50701 / NCIMB 9529 / HD100).